Consider the following 131-residue polypeptide: Large ribosomal subunit protein bL21 (131 aa).

The protein belongs to the bacterial ribosomal protein bL21 family. As to quaternary structure, part of the 50S ribosomal subunit. Contacts protein L20.

This protein binds to 23S rRNA in the presence of protein L20. The sequence is that of Large ribosomal subunit protein bL21 from Cereibacter sphaeroides (strain ATCC 17023 / DSM 158 / JCM 6121 / CCUG 31486 / LMG 2827 / NBRC 12203 / NCIMB 8253 / ATH 2.4.1.) (Rhodobacter sphaeroides).